Here is a 452-residue protein sequence, read N- to C-terminus: Flavin-containing monooxygenase FMO GS-OX-like 4 (452 aa).

An FAD-binding site is contributed by 17–22 (GAGAAG). Position 217 to 222 (217 to 222 (GNSASA)) interacts with NADP(+).

Belongs to the FMO family. FAD serves as cofactor.

In terms of biological role, catalyzes the conversion of methylthioalkyl glucosinolates of any chain length into methylsulfinylalkyl glucosinolates. The protein is Flavin-containing monooxygenase FMO GS-OX-like 4 of Arabidopsis thaliana (Mouse-ear cress).